A 284-amino-acid polypeptide reads, in one-letter code: Putative thiosulfate sulfurtransferase SseB (284 aa).

Rhodanese domains follow at residues 20-138 and 169-280; these read AGDP…SIET and GAGG…RPVG. Arginine 183 contributes to the substrate binding site. The active-site Cysteine persulfide intermediate is cysteine 241.

The catalysed reaction is thiosulfate + hydrogen cyanide = thiocyanate + sulfite + 2 H(+). This is Putative thiosulfate sulfurtransferase SseB (sseB) from Mycobacterium tuberculosis (strain CDC 1551 / Oshkosh).